A 49-amino-acid polypeptide reads, in one-letter code: Photosystem I reaction center subunit IX (49 aa).

Residues 14-34 (FISTAPVAATIWLTITAGILI) traverse the membrane as a helical segment.

The protein belongs to the PsaJ family.

The protein localises to the cellular thylakoid membrane. Functionally, may help in the organization of the PsaE and PsaF subunits. This is Photosystem I reaction center subunit IX from Nostoc punctiforme (strain ATCC 29133 / PCC 73102).